The following is a 228-amino-acid chain: PKHD-type hydroxylase Rmet_3078 (228 aa).

Residues 80 to 180 (IVYPPMFNRY…RVGCFFWIQS (101 aa)) enclose the Fe2OG dioxygenase domain. Positions 98, 100, and 161 each coordinate Fe cation. Arg171 serves as a coordination point for 2-oxoglutarate.

Fe(2+) is required as a cofactor. It depends on L-ascorbate as a cofactor.

The protein is PKHD-type hydroxylase Rmet_3078 of Cupriavidus metallidurans (strain ATCC 43123 / DSM 2839 / NBRC 102507 / CH34) (Ralstonia metallidurans).